The primary structure comprises 634 residues: Phospholipase B (634 aa).

The first 19 residues, 1 to 19 (MSIITTAFALSLLATTAFA), serve as a signal peptide directing secretion. A PLA2c domain is found at 46 to 569 (DCPSNVTWIR…DTWCWAGDDN (524 aa)). Residues Asn50, Asn56, Asn122, Asn231, Asn246, Asn269, Asn311, Asn340, Asn384, Asn430, Asn478, Asn498, Asn525, Asn550, Asn569, Asn591, and Asn603 are each glycosylated (N-linked (GlcNAc...) asparagine).

The protein belongs to the lysophospholipase family. Post-translationally, N-glycosylated.

It is found in the secreted. It carries out the reaction a 1-acyl-sn-glycero-3-phosphocholine + H2O = sn-glycerol 3-phosphocholine + a fatty acid + H(+). In terms of biological role, exhibits phospholipase B (PLB), lysophospholipase (LPL) and lysophospholipase/transacylase (LPTA) activities. This chain is Phospholipase B (PLB1), found in Cryptococcus neoformans var. neoformans serotype D (strain JEC21 / ATCC MYA-565) (Filobasidiella neoformans).